A 1020-amino-acid chain; its full sequence is C2 and GRAM domain-containing protein At1g03370 (1020 aa).

The C2 1 domain maps to 1–102; sequence MKLQVRVVEA…ENQSLGTVWY (102 aa). Asp-17, Asp-23, Asp-69, Asp-71, and Asp-77 together coordinate Ca(2+). Polar residues-rich tracts occupy residues 134–144 and 158–172; these read TSSGDQTSASR and TCASPSRSDDASSIP. A disordered region spans residues 134–172; it reads TSSGDQTSASRSPDLRLESPIDPSTCASPSRSDDASSIP. One can recognise a VASt 1 domain in the interval 249-421; the sequence is SGGVVVDQLF…LLAQSVKPVD (173 aa). Residues 454-474 traverse the membrane as a helical segment; that stretch reads FTVLSTFLIGIYVFVHIVFAI. A C2 2 domain is found at 517–635; that stretch reads QARKQKGSDH…NISDLADVWV (119 aa). The Ca(2+) site is built by Asp-551, Asp-557, Asp-604, Phe-605, and Asp-606. Positions 689-752 constitute a GRAM domain; it reads AFQKLFGLPQ…LWEDIEEIQV (64 aa). Residues 848–1010 form the VASt 2 domain; sequence RFSEVFSLTL…MTFGFLEKEY (163 aa).

Requires Ca(2+) as cofactor.

It is found in the membrane. This Arabidopsis thaliana (Mouse-ear cress) protein is C2 and GRAM domain-containing protein At1g03370.